Reading from the N-terminus, the 344-residue chain is Arginine N-succinyltransferase (344 aa).

L125 provides a ligand contact to succinyl-CoA. Catalysis depends on H229, which acts as the Proton donor.

The protein belongs to the arginine N-succinyltransferase family.

It catalyses the reaction succinyl-CoA + L-arginine = N(2)-succinyl-L-arginine + CoA + H(+). It functions in the pathway amino-acid degradation; L-arginine degradation via AST pathway; L-glutamate and succinate from L-arginine: step 1/5. Its function is as follows. Catalyzes the transfer of succinyl-CoA to arginine to produce N(2)-succinylarginine. The sequence is that of Arginine N-succinyltransferase from Shigella dysenteriae serotype 1 (strain Sd197).